Consider the following 380-residue polypeptide: Queuine tRNA-ribosyltransferase (380 aa).

Residue D96 is the Proton acceptor of the active site. Residues 96 to 100, D150, Q193, and G220 each bind substrate; that span reads DSGGF. The interval 251–257 is RNA binding; the sequence is GVGAPDS. D270 functions as the Nucleophile in the catalytic mechanism. The interval 275–279 is RNA binding; important for wobble base 34 recognition; the sequence is TRIAR. Zn(2+) is bound by residues C308, C310, C313, and H339.

Belongs to the queuine tRNA-ribosyltransferase family. Homodimer. Within each dimer, one monomer is responsible for RNA recognition and catalysis, while the other monomer binds to the replacement base PreQ1. Requires Zn(2+) as cofactor.

The catalysed reaction is 7-aminomethyl-7-carbaguanine + guanosine(34) in tRNA = 7-aminomethyl-7-carbaguanosine(34) in tRNA + guanine. The protein operates within tRNA modification; tRNA-queuosine biosynthesis. In terms of biological role, catalyzes the base-exchange of a guanine (G) residue with the queuine precursor 7-aminomethyl-7-deazaguanine (PreQ1) at position 34 (anticodon wobble position) in tRNAs with GU(N) anticodons (tRNA-Asp, -Asn, -His and -Tyr). Catalysis occurs through a double-displacement mechanism. The nucleophile active site attacks the C1' of nucleotide 34 to detach the guanine base from the RNA, forming a covalent enzyme-RNA intermediate. The proton acceptor active site deprotonates the incoming PreQ1, allowing a nucleophilic attack on the C1' of the ribose to form the product. After dissociation, two additional enzymatic reactions on the tRNA convert PreQ1 to queuine (Q), resulting in the hypermodified nucleoside queuosine (7-(((4,5-cis-dihydroxy-2-cyclopenten-1-yl)amino)methyl)-7-deazaguanosine). The protein is Queuine tRNA-ribosyltransferase of Streptococcus equi subsp. equi (strain 4047).